Reading from the N-terminus, the 248-residue chain is PF03932 family protein CutC (248 aa).

The protein belongs to the CutC family. As to quaternary structure, homodimer.

It is found in the cytoplasm. This is PF03932 family protein CutC from Escherichia coli O127:H6 (strain E2348/69 / EPEC).